Here is a 315-residue protein sequence, read N- to C-terminus: Methionyl-tRNA formyltransferase (315 aa).

A (6S)-5,6,7,8-tetrahydrofolate-binding site is contributed by 113–116 (SILP).

The protein belongs to the Fmt family.

It catalyses the reaction L-methionyl-tRNA(fMet) + (6R)-10-formyltetrahydrofolate = N-formyl-L-methionyl-tRNA(fMet) + (6S)-5,6,7,8-tetrahydrofolate + H(+). Attaches a formyl group to the free amino group of methionyl-tRNA(fMet). The formyl group appears to play a dual role in the initiator identity of N-formylmethionyl-tRNA by promoting its recognition by IF2 and preventing the misappropriation of this tRNA by the elongation apparatus. The chain is Methionyl-tRNA formyltransferase from Aliivibrio fischeri (strain MJ11) (Vibrio fischeri).